We begin with the raw amino-acid sequence, 513 residues long: ATP synthase subunit alpha (513 aa).

169–176 (GDRQTGKT) contacts ATP.

It belongs to the ATPase alpha/beta chains family. F-type ATPases have 2 components, CF(1) - the catalytic core - and CF(0) - the membrane proton channel. CF(1) has five subunits: alpha(3), beta(3), gamma(1), delta(1), epsilon(1). CF(0) has three main subunits: a(1), b(2) and c(9-12). The alpha and beta chains form an alternating ring which encloses part of the gamma chain. CF(1) is attached to CF(0) by a central stalk formed by the gamma and epsilon chains, while a peripheral stalk is formed by the delta and b chains.

It is found in the cell inner membrane. The catalysed reaction is ATP + H2O + 4 H(+)(in) = ADP + phosphate + 5 H(+)(out). Produces ATP from ADP in the presence of a proton gradient across the membrane. The alpha chain is a regulatory subunit. The chain is ATP synthase subunit alpha from Vesicomyosocius okutanii subsp. Calyptogena okutanii (strain HA).